Reading from the N-terminus, the 695-residue chain is GATA zinc finger domain-containing protein 16 (695 aa).

3 disordered regions span residues 82 to 111 (SPIL…SNNA), 134 to 304 (VVNS…QQDK), and 422 to 472 (NNQF…KMRY). Low complexity-rich tracts occupy residues 87-111 (SQQQ…SNNA) and 140-149 (KTTTTNNKPP). A coiled-coil region spans residues 150-174 (KQSKRKEKERLEEEKQTVAQQQQYQ). A compositionally biased stretch (basic and acidic residues) spans 155-165 (KEKERLEEEKQ). Polar residues predominate over residues 199–209 (VSTTPYGNSQF). Residues 210 to 298 (NNNNNNNNNN…NSNSNNNNNN (89 aa)) show a composition bias toward low complexity. Over residues 422-433 (NNQFSGDKQSAL) the composition is skewed to polar residues. A compositionally biased stretch (low complexity) spans 434-446 (NNVKNSKGGNTNN). Residues 479–504 (CHTCGVTNTPEWRRGPNGAKTLCNAC) form a GATA-type zinc finger. The segment at 523–646 (NSTGVNITEP…TTNSITTPTT (124 aa)) is disordered. 2 stretches are compositionally biased toward low complexity: residues 544-556 (DNNN…SDSN) and 564-646 (GSNN…TPTT).

The sequence is that of GATA zinc finger domain-containing protein 16 (gtaP) from Dictyostelium discoideum (Social amoeba).